We begin with the raw amino-acid sequence, 103 residues long: c-Myc-binding protein (103 aa).

It belongs to the AMY1 family. In terms of assembly, binds via its C-terminal region to the N-terminal region of MYC. Associates with AKAP1/S-AKAP84. Interacts with MYCBPAP. Interacts with CFAP91. Highly expressed in heart, placenta, pancreas, skeletal muscle and kidney. Also present at low levels in lung.

Its subcellular location is the cytoplasm. It localises to the nucleus. It is found in the mitochondrion. Functionally, may control the transcriptional activity of MYC. Stimulates the activation of E box-dependent transcription by MYC. The chain is c-Myc-binding protein from Homo sapiens (Human).